The sequence spans 262 residues: Protein BREAKING OF ASYMMETRY IN THE STOMATAL LINEAGE (262 aa).

2 disordered regions span residues 32–107 (DEDG…QPPV) and 129–222 (KEGK…GRGS). Low complexity predominate over residues 37–47 (NNNGNTTNNNN). 2 short sequence motifs (nuclear localization signal) span residues 50 to 57 (FKRIKRKI) and 61 to 68 (KKKRSERK). The segment covering 51–66 (KRIKRKIKSTKKKRSE) has biased composition (basic residues). Serine 72, serine 85, serine 86, and serine 87 each carry phosphoserine; by ASK7. Residues 84 to 95 (RSSSVSPTTSGS) are compositionally biased toward low complexity. Serine 89 is modified (phosphoserine; by ASK7 and MPK6). Threonine 91 is subject to Phosphothreonine; by ASK7. Basic and acidic residues predominate over residues 129-146 (KEGKQEKKETESSSEKSP). A phosphoserine; by MPK6 mark is found at serine 145 and serine 168. Residues 179 to 189 (NDNTSCQGTKD) are compositionally biased toward polar residues. A compositionally biased stretch (basic and acidic residues) spans 190–200 (VSSDVTERTKE). The tract at residues 222 to 262 (SFAFPILGVEWMGSPAKMPESDDLSPKKQKPVALGFQCCRF) is required for polarization at the cell cortex. Residues 223-226 (FAFP) carry the FxFP, required for cortical polarity formation motif. Serine 235 and serine 246 each carry phosphoserine; by MPK6.

In terms of assembly, component of a complex made of POLAR, BASL, ASK7/BIN2 and ASK3/SK12. Interacts with POLAR, ASK7/BIN2 and ASK3/SK12. Binds to YDA when phosphorylated. Interacts with MPK6, MPK3 and MKK5. In terms of processing, cortical localization of BASL requires phosphorylation mediated by MPK3 and MPK6. Phosphorylation promotes YDA binding. Phosphorylation status modulates subcellular mobility. Mostly expressed in stomatal lineage cells including asymmetrically dividing meristemoid mother cells (MMCs) and meristemoids, and, at lower levels, in their sisters. Also present in vasculature. Expressed at low levels in the epidermal pavement cells.

The protein resides in the cytoplasm. It localises to the nucleus. The protein localises to the cell cortex. Its subcellular location is the cell membrane. Regulates asymmetric cell division (ACD), especially in stomatal-lineage cells, probably by modulating accumulation and subcellular polarization of POLAR and SPCH. Mediates an attenuation of MAPK signaling upon polarization of POLAR and ASK7/BIN2 in stomatal lineage ground cells (SLGCs) undergoing ACD, and relieves BIN2 inhibition of SPCH in the nucleus. When phosphorylated, functions as a scaffold and recruits the MAPKKK YODA, MPK3 and MPK6 to spatially reorganize the MAPK signaling pathway at the cortex of cells undergoing ACD. Cortical polarization leads to elevated nuclear MPK6 signaling and lowered SPCH abundance in one of the two daughter cells, thus differentiating the two daughter cells after ACD. The chain is Protein BREAKING OF ASYMMETRY IN THE STOMATAL LINEAGE from Arabidopsis thaliana (Mouse-ear cress).